A 121-amino-acid polypeptide reads, in one-letter code: Small ribosomal subunit protein uS13 (121 aa).

The tract at residues 92–121 (RKGLPCRGQRTRTNARTRKGPRKAAQSLKK) is disordered.

The protein belongs to the universal ribosomal protein uS13 family. Part of the 30S ribosomal subunit. Forms a loose heterodimer with protein S19. Forms two bridges to the 50S subunit in the 70S ribosome.

Its function is as follows. Located at the top of the head of the 30S subunit, it contacts several helices of the 16S rRNA. In the 70S ribosome it contacts the 23S rRNA (bridge B1a) and protein L5 of the 50S subunit (bridge B1b), connecting the 2 subunits; these bridges are implicated in subunit movement. Contacts the tRNAs in the A and P-sites. This is Small ribosomal subunit protein uS13 from Janthinobacterium sp. (strain Marseille) (Minibacterium massiliensis).